The following is a 313-amino-acid chain: Ribosomal RNA small subunit methyltransferase H (313 aa).

S-adenosyl-L-methionine is bound by residues 35 to 37, aspartate 55, phenylalanine 79, aspartate 101, and glutamine 108; that span reads GGH.

Belongs to the methyltransferase superfamily. RsmH family.

The protein localises to the cytoplasm. The enzyme catalyses cytidine(1402) in 16S rRNA + S-adenosyl-L-methionine = N(4)-methylcytidine(1402) in 16S rRNA + S-adenosyl-L-homocysteine + H(+). Its function is as follows. Specifically methylates the N4 position of cytidine in position 1402 (C1402) of 16S rRNA. This chain is Ribosomal RNA small subunit methyltransferase H, found in Salmonella arizonae (strain ATCC BAA-731 / CDC346-86 / RSK2980).